Consider the following 339-residue polypeptide: Small ribosomal subunit biogenesis GTPase RsgA (339 aa).

The CP-type G domain occupies 111–271; sequence MRGLLKPVAA…LIDSPGIREF (161 aa). GTP contacts are provided by residues 159-162 and 213-221; these read NKAD and GQSGVGKSS. Positions 295, 300, 302, and 308 each coordinate Zn(2+).

This sequence belongs to the TRAFAC class YlqF/YawG GTPase family. RsgA subfamily. As to quaternary structure, monomer. Associates with 30S ribosomal subunit, binds 16S rRNA. Zn(2+) serves as cofactor.

The protein resides in the cytoplasm. Its function is as follows. One of several proteins that assist in the late maturation steps of the functional core of the 30S ribosomal subunit. Helps release RbfA from mature subunits. May play a role in the assembly of ribosomal proteins into the subunit. Circularly permuted GTPase that catalyzes slow GTP hydrolysis, GTPase activity is stimulated by the 30S ribosomal subunit. This Pseudomonas aeruginosa (strain LESB58) protein is Small ribosomal subunit biogenesis GTPase RsgA.